The chain runs to 465 residues: MVTLTFLLSAAYLLSGRVSAAPSSAGSKSCDTVDLGYQCSPATSHLWGQYSPFFSLEDELSVSSKLPKDCRITLVQVLSRHGARYPTSSKSKKYKKLVTAIQANATDFKGKFAFLKTYNYTLGADDLTPFGEQQLVNSGIKFYQRYKALARSVVPFIRASGSDRVIASGEKFIEGFQQAKLADPGATNRAAPAISVIIPESETFNNTLDHGVCTKFEASQLGDEVAANFTALFAPDIRARAEKHLPGVTLTDEDVVSLMDMCSFDTVARTSDASQLSPFCQLFTHNEWKKYNYLQSLGKYYGYGAGNPLGPAQGIGFTNELIARLTRSPVQDHTSTNSTLVSNPATFPLNATMYVDFSHDNSMVSIFFALGLYNGTEPLSRTSVESAKELDGYSASWVVPFGARAYFETMQCKSEKEPLVRALINDRVVPLHGCDVDKLGRCKLNDFVKGLSWARSGGNWGECFS.

The N-terminal stretch at 1-26 (MVTLTFLLSAAYLLSGRVSAAPSSAG) is a signal peptide. A disulfide bridge connects residues Cys-30 and Cys-39. Residues Gln-49, Tyr-50, Arg-80, His-81, Arg-84, and Thr-87 each coordinate 1D-myo-inositol hexakisphosphate. Disulfide bonds link Cys-70-Cys-412, Cys-213-Cys-463, Cys-262-Cys-280, and Cys-434-Cys-442. The active-site Nucleophile is His-81. A glycan (N-linked (GlcNAc...) asparagine) is linked at Asn-104. Arg-164 serves as a coordination point for 1D-myo-inositol hexakisphosphate. N-linked (GlcNAc...) asparagine glycosylation is present at Asn-205. Asp-209 contacts 1D-myo-inositol hexakisphosphate. Asn-228 carries N-linked (GlcNAc...) asparagine glycosylation. Lys-299 serves as a coordination point for 1D-myo-inositol hexakisphosphate. N-linked (GlcNAc...) asparagine glycosylation is found at Asn-337 and Asn-350. 2 residues coordinate 1D-myo-inositol hexakisphosphate: His-359 and Asp-360. Asn-374 carries N-linked (GlcNAc...) asparagine glycosylation.

It belongs to the histidine acid phosphatase family. As to quaternary structure, monomer.

The protein resides in the secreted. It carries out the reaction 1D-myo-inositol hexakisphosphate + H2O = 1D-myo-inositol 1,2,4,5,6-pentakisphosphate + phosphate. The catalysed reaction is 1D-myo-inositol 1,2,4,5,6-pentakisphosphate + H2O = 1D-myo-inositol 1,2,5,6-tetrakisphosphate + phosphate. The enzyme catalyses 1D-myo-inositol 1,2,5,6-tetrakisphosphate + H2O = 1D-myo-inositol 1,2,6-trisphosphate + phosphate. It catalyses the reaction 1D-myo-inositol 1,2,6-trisphosphate + H2O = 1D-myo-inositol 1,2-bisphosphate + phosphate. It carries out the reaction 1D-myo-inositol 1,2-bisphosphate + H2O = 1D-myo-inositol 2-phosphate + phosphate. Catalyzes the phosphate monoester hydrolysis of phytic acid (myo-inositol hexakisphosphate), which results in the stepwise formation of myo-inositol pentakis-, tetrakis-, tris-, bis-, and monophosphates, as well as the liberation of inorganic phosphate. Myo-inositol 2-monophosphate is the end product. Has a broad substrate specificity and is also able to dephosphorylate other classic acid phosphatase substrates such as p-nitrophenyl phosphate, phenyl phosphate, fructose 1,6-bisphosphate, fructose 6-phosphate, glucose 6-phosphate, ribose 5-phosphate, alpha-glycerophosphate, beta-glycerophosphate, 3-phosphoglycerate, phosphoenolpyruvate, as well as ADP and ATP. The chain is Phytase A (phyA) from Aspergillus fumigatus (strain ATCC MYA-4609 / CBS 101355 / FGSC A1100 / Af293) (Neosartorya fumigata).